Consider the following 283-residue polypeptide: Gap junction beta-1 protein (283 aa).

Over 1–22 the chain is Cytoplasmic; sequence MNWTGLYTLLSGVNRHSTAIGR. A helical membrane pass occupies residues 23–45; the sequence is VWLSVIFIFRIMVLVVAAESVWG. Residues 46 to 75 are Extracellular-facing; sequence DEKSSFICNTLQPGCNSVCYDQFFPISHVR. The chain crosses the membrane as a helical span at residues 76–95; it reads LWSLQLILVSTPALLVAMHV. Residues 96 to 130 lie on the Cytoplasmic side of the membrane; sequence AHQQHIEKKMLRLEGHGDPLHLEEVKRHKVHISGT. The helical transmembrane segment at 131–153 threads the bilayer; it reads LWWAYVISVVFRLLFEAVFMYVF. At 154–191 the chain is on the extracellular side; sequence YLLYPGYAMVRLVKCDVYPCPNTVDCFVSRPTEKTVFT. Residues 192–214 traverse the membrane as a helical segment; the sequence is VFMLAASGICIILNVAEVVYLII. Over 215–283 the chain is Cytoplasmic; the sequence is RACARRAQRR…AEKSDRCSAC (69 aa). Residues Ser233, Ser258, Ser266, and Ser277 each carry the phosphoserine modification.

Belongs to the connexin family. Beta-type (group I) subfamily. As to quaternary structure, a connexon is composed of a hexamer of connexins. Interacts with CNST.

It localises to the cell membrane. The protein localises to the cell junction. It is found in the gap junction. Its function is as follows. One gap junction consists of a cluster of closely packed pairs of transmembrane channels, the connexons, through which materials of low MW diffuse from one cell to a neighboring cell. The polypeptide is Gap junction beta-1 protein (GJB1) (Macaca fascicularis (Crab-eating macaque)).